Consider the following 83-residue polypeptide: Mitochondrial import inner membrane translocase subunit Tim8 (83 aa).

The Twin CX3C motif signature appears at 35–60; sequence CWDVCFADYRPPSKMDGKTQTCIQNC. 2 cysteine pairs are disulfide-bonded: cysteine 35–cysteine 60 and cysteine 39–cysteine 56.

The protein belongs to the small Tim family. As to quaternary structure, heterohexamer; composed of 3 copies of ddp-1/tim-8 and 3 copies of tin-13/tim-13, named soluble 70 kDa complex. Associates with the TIM22 complex, whose core is composed of tim-22.

It localises to the mitochondrion inner membrane. In terms of biological role, mitochondrial intermembrane chaperone that participates in the import and insertion of some multi-pass transmembrane proteins into the mitochondrial inner membrane. Also required for the transfer of beta-barrel precursors from the TOM complex to the sorting and assembly machinery (SAM complex) of the outer membrane. Acts as a chaperone-like protein that protects the hydrophobic precursors from aggregation and guide them through the mitochondrial intermembrane space. The ddp-1/tim-8-tim-13 complex mediates the import of some proteins while the predominant tim-9/tin-9.1-tim-10/tin-10 70 kDa complex mediates the import of much more proteins. The chain is Mitochondrial import inner membrane translocase subunit Tim8 from Caenorhabditis elegans.